The following is a 360-amino-acid chain: Putative F-box protein At3g16210 (360 aa).

The 48-residue stretch at 1 to 48 (MSKFLPEELAIEILVRLSMKDLARFRCVCKTWRDLINDPGFTETYRDM) folds into the F-box domain.

This is Putative F-box protein At3g16210 from Arabidopsis thaliana (Mouse-ear cress).